The following is a 329-amino-acid chain: Glycerol-3-phosphate dehydrogenase [NAD(P)+] (329 aa).

Positions 11, 30, and 103 each coordinate NADPH. Residues K103, G132, and S134 each contribute to the sn-glycerol 3-phosphate site. Residue A136 participates in NADPH binding. Positions 187, 240, 250, 251, and 252 each coordinate sn-glycerol 3-phosphate. K187 serves as the catalytic Proton acceptor. Position 251 (R251) interacts with NADPH. Residues V275 and E277 each contribute to the NADPH site.

The protein belongs to the NAD-dependent glycerol-3-phosphate dehydrogenase family.

It is found in the cytoplasm. It catalyses the reaction sn-glycerol 3-phosphate + NAD(+) = dihydroxyacetone phosphate + NADH + H(+). The enzyme catalyses sn-glycerol 3-phosphate + NADP(+) = dihydroxyacetone phosphate + NADPH + H(+). The protein operates within membrane lipid metabolism; glycerophospholipid metabolism. Catalyzes the reduction of the glycolytic intermediate dihydroxyacetone phosphate (DHAP) to sn-glycerol 3-phosphate (G3P), the key precursor for phospholipid synthesis. In Nitrosomonas eutropha (strain DSM 101675 / C91 / Nm57), this protein is Glycerol-3-phosphate dehydrogenase [NAD(P)+].